The primary structure comprises 426 residues: Histidine--tRNA ligase (426 aa).

The protein belongs to the class-II aminoacyl-tRNA synthetase family. In terms of assembly, homodimer.

It localises to the cytoplasm. It carries out the reaction tRNA(His) + L-histidine + ATP = L-histidyl-tRNA(His) + AMP + diphosphate + H(+). This Lactiplantibacillus plantarum (strain ATCC BAA-793 / NCIMB 8826 / WCFS1) (Lactobacillus plantarum) protein is Histidine--tRNA ligase.